We begin with the raw amino-acid sequence, 329 residues long: Urease accessory protein UreD 2 (329 aa).

The disordered stretch occupies residues 100–120 (YSRPSDSSKFTNGTQSANSNT). A compositionally biased stretch (polar residues) spans 103–120 (PSDSSKFTNGTQSANSNT).

The protein belongs to the UreD family. In terms of assembly, ureD, UreF and UreG form a complex that acts as a GTP-hydrolysis-dependent molecular chaperone, activating the urease apoprotein by helping to assemble the nickel containing metallocenter of UreC. The UreE protein probably delivers the nickel.

Its subcellular location is the cytoplasm. Functionally, required for maturation of urease via the functional incorporation of the urease nickel metallocenter. This chain is Urease accessory protein UreD 2, found in Psychrobacter cryohalolentis (strain ATCC BAA-1226 / DSM 17306 / VKM B-2378 / K5).